Reading from the N-terminus, the 34-residue chain is Photosystem II reaction center protein T (34 aa).

A helical membrane pass occupies residues 3–23 (SVAYILIFTLTIGTLFFAVAF).

It belongs to the PsbT family. As to quaternary structure, PSII is composed of 1 copy each of membrane proteins PsbA, PsbB, PsbC, PsbD, PsbE, PsbF, PsbH, PsbI, PsbJ, PsbK, PsbL, PsbM, PsbT, PsbX, PsbY, PsbZ, Psb30/Ycf12, peripheral proteins PsbO, CyanoQ (PsbQ), PsbU, PsbV and a large number of cofactors. It forms dimeric complexes.

The protein localises to the cellular thylakoid membrane. In terms of biological role, found at the monomer-monomer interface of the photosystem II (PS II) dimer, plays a role in assembly and dimerization of PSII. PSII is a light-driven water plastoquinone oxidoreductase, using light energy to abstract electrons from H(2)O, generating a proton gradient subsequently used for ATP formation. The chain is Photosystem II reaction center protein T from Mastigocladus laminosus (Fischerella sp.).